Reading from the N-terminus, the 556-residue chain is Formate--tetrahydrofolate ligase (556 aa).

ATP is bound at residue 65–72 (TPAGEGKS).

The protein belongs to the formate--tetrahydrofolate ligase family.

It catalyses the reaction (6S)-5,6,7,8-tetrahydrofolate + formate + ATP = (6R)-10-formyltetrahydrofolate + ADP + phosphate. Its pathway is one-carbon metabolism; tetrahydrofolate interconversion. The protein is Formate--tetrahydrofolate ligase of Streptococcus equi subsp. zooepidemicus (strain H70).